A 253-amino-acid polypeptide reads, in one-letter code: Aminoglycoside nucleotidyltransferase (4') (253 aa).

In terms of assembly, homodimer.

It catalyses the reaction kanamycin A + ATP = 4'-adenylylkanamycin A + diphosphate. It carries out the reaction amikacin + ATP = 4'-adenylylamikacin + diphosphate. The enzyme catalyses neomycin B + ATP = 4'-adenylylneomycin B + diphosphate. The catalysed reaction is paromomycin + ATP = 4'-adenylylparomomycin + diphosphate. It catalyses the reaction ribostamycin + ATP = 4'-adenylylribostamycin + diphosphate. It carries out the reaction tobramycin + ATP = 4'-adenylyltobramycin + diphosphate. The enzyme catalyses kanamycin A + CTP = 4'-cytidylylkanamycin A + diphosphate. The catalysed reaction is kanamycin A + GTP = 4'-guanylylkanamycin A + diphosphate. It catalyses the reaction kanamycin A + ITP = 4'-inosinylylkanamycin A + diphosphate. It carries out the reaction dTTP + kanamycin A = 4'-thymidylylkanamycin A + diphosphate. The enzyme catalyses kanamycin A + UTP = 4'-uridylylkanamycin A + diphosphate. The catalysed reaction is kanamycin A + dATP = 4'-(2'-deoxyadenylyl)kanamycin A + diphosphate. It catalyses the reaction kanamycin A + dCTP = 4'-(2'-deoxycytidylyl)kanamycin A + diphosphate. It carries out the reaction kanamycin A + dGTP = 4'-(2'-deoxyguanylyl)kanamycin A + diphosphate. The enzyme catalyses dUTP + kanamycin A = 4'-(2'-deoxyuridylyl)kanamycin A + diphosphate. The catalysed reaction is amikacin + GTP = 4'-guanylylamikacin + diphosphate. It catalyses the reaction amikacin + ITP = 4'-inosinylylamikacin + diphosphate. It carries out the reaction amikacin + CTP = 4'-cytidylylamikacin + diphosphate. The enzyme catalyses amikacin + UTP = 4'-uridylylamikacin + diphosphate. The catalysed reaction is amikacin + dTTP = 4'-thymidylylamikacin + diphosphate. Functionally, inactivates aminoglycoside antibiotics such as kanamycin by catalyzing the transfer of a nucleotidyl group from nucleoside triphosphates such as (d)ATP to the 4'-hydroxyl group of the aminoglycoside. The polypeptide is Aminoglycoside nucleotidyltransferase (4') (Bacillus sp).